A 139-amino-acid polypeptide reads, in one-letter code: Putative nickel-responsive regulator (139 aa).

4 residues coordinate Ni(2+): histidine 79, histidine 90, histidine 92, and cysteine 98.

The protein belongs to the transcriptional regulatory CopG/NikR family. Ni(2+) serves as cofactor.

Transcriptional regulator. The sequence is that of Putative nickel-responsive regulator from Anaeromyxobacter sp. (strain K).